Here is a 38-residue protein sequence, read N- to C-terminus: Potassium channel toxin alpha-KTx 2.13 (38 aa).

Intrachain disulfides connect cysteine 7–cysteine 29, cysteine 13–cysteine 34, and cysteine 17–cysteine 36.

This sequence belongs to the short scorpion toxin superfamily. Potassium channel inhibitor family. Alpha-KTx 02 subfamily. As to expression, expressed by the venom gland.

The protein localises to the secreted. In terms of biological role, selective inhibitor of voltage-gated potassium channels, blocks the Kv1.2/KCNA2 (Kd=1.3 nM) and Kv1.3/KCNA3 (Kd=7.2 nM) channels. Association and dissociation rates of the toxin are slower for Kv1.2/KCNA2 than for Kv1.3/KCNA3. In Centruroides suffusus (Durango bark scorpion), this protein is Potassium channel toxin alpha-KTx 2.13.